The chain runs to 59 residues: Conorfamide-Vc1 (59 aa).

The first 19 residues, 1 to 19 (MSGRGFLLLALLLLVTVEA), serve as a signal peptide directing secretion. The propeptide occupies 20–25 (TKVEKK). Residues 32–39 (AWSGPRNR) are positively charged region crucial for activity against MRGPRX1 receptors. The residue at position 43 (phenylalanine 43) is a Phenylalanine amide. The propeptide occupies 45–59 (RRDMQSPLLSERLRL).

It belongs to the FARP (FMRFamide related peptide) family. Expressed by the venom duct.

It is found in the secreted. In terms of biological role, this peptide activates human and mouse sensory neuron-specific G-protein coupled receptors MRGPRX1. The activity on human receptors has been measured (EC(50)=1.8 uM). Compared with the agonist chloroquine (anti-malaria drug), it is 200-fold more potent. The peptide also causes an increase in cytosolic calcium in a specific subset of DRG neurons, and, in contrast to other Conus venom peptides, the peptide also affects a large fraction of the non-neuronal cells. In vivo, when intracranially injected into mice, it principally renders mice unable to move, and at very low doses, it causes hyperactivity. It also induces itch sensation, since intradermal cheek injection into humanized transgenic mouse (mouse MRGPRX1 replaced by human MRGPRX1) induces scratching. In vivo, when tested at high doses (10 uM) on zebrafish larvae, it induces a range of behavioral effects ranging from an early hypoactivity during the first hour of treatment to an increase in movement during the following hours when the larvae are submitted to strobe light phases. The chain is Conorfamide-Vc1 from Conus victoriae (Queen Victoria cone).